The sequence spans 466 residues: MKIRWIRLSLVAILIIAVVFIGVIGFQKYQFSKSRNKVIMQMDRLMKDQDGGNFRRLDKKENGVEIISYIPKTTEKKDNEIIQKEIGKATDAEVKKLNRDKETQGIIFYTYQKHRMAEQAISYKAVQSEYVKEGRTKFVLKDKKDICKNIVTDAETGALLTLGEVLIKSNQTKLNLKTAVEEELIKTGDFSLKDVGNLGKIKSLVKWNQTDFEITNSEIILPVKIPGAPEPKKVKVKLADIASSVNKRYLPSSVKVPEVPKAKTNKRIALTFDDGPSSSVTPGVLDTLKRHNVKATFFVLGSSVIQNPGLVKRELEEGHQVGSHSWDHPQLTKQSTQEVYNQILKTQKAVFDQTGYFPTTMRPPYGAVNKQVAEEIGLPIIQWSVDTEDWKYRNAGIVTKKVLAGATDGAIVLMHDIHKTTAASLDTTLTKLKSQGYEFVTIDELYGEKLQIGKQYFDKTDSRMVK.

The Cytoplasmic segment spans residues 1 to 5 (MKIRW). Residues 6–26 (IRLSLVAILIIAVVFIGVIGF) traverse the membrane as a helical segment. The Extracellular segment spans residues 27–466 (QKYQFSKSRN…FDKTDSRMVK (440 aa)). One can recognise a NodB homology domain in the interval 266–440 (KRIALTFDDG…KLKSQGYEFV (175 aa)). Catalysis depends on Asp273, which acts as the Proton acceptor. Zn(2+) is bound by residues Asp274, His324, and His328. Tyr365 lines the substrate pocket. The active-site Proton donor is His415.

As to quaternary structure, homodimer. Interacts (via transmembrane domain) with PbpA1 (via transmembrane domain); the interaction is important for the peptidoglycan N-deacetylase function of this protein. Requires Zn(2+) as cofactor.

It localises to the cell membrane. The protein localises to the secreted. It is found in the cell wall. The catalysed reaction is peptidoglycan-N-acetyl-D-glucosamine + H2O = peptidoglycan-D-glucosamine + acetate.. Functionally, catalyzes the deacetylation of N-acetylglucosamine (GlcNAc) residues in peptidoglycan (PG). Also deacetylates N-acetylated PG. Does not deacetylate N-acetylmuramic acid. Confers host lysozyme resistance. Critical for virulence and escape from innate immune response of the host. Required for intracellular survival of bacteria in macrophages of the host. Required for successful host colonization. Controls the production of inflammatory mediators in the bone marrow derived macrophages (BMMs) of the infected mouse. Suppresses Toll-like receptor 2 (TLR2)-dependent secretion of interleukin 6 (IL-6) and interferon-beta (IFN-beta) in the macrophages of the infected mouse. May decrease accessibility of pattern recognition receptors (PRRs) such as nucleotide-binding oligomerization domain protein (NOD) 1 of the host to the bacterial cell wall components. Protects cells from autolysis induced by lysozyme or by other autolysis-inducing agents. The chain is Peptidoglycan-N-acetylglucosamine deacetylase PgdA from Listeria monocytogenes serotype 1/2a (strain 10403S).